The following is a 976-amino-acid chain: MKRSVPQDFNLVYPYKAKRPNIMPPFFDRNGFVENQEATLAMLVEKPLTFDKEGALTLGVGRGIRINPAGLLETNDLASAVFPPLASDEAGNVTLNMSDGLYTKDNKLAVKVGPGLSLDSNNALQVHTGDGLTVTDDKVSLNTQAPLSTTSAGLSLLLGPSLHLGEEERLTVNTGAGLQISNNALAVKVGSGITVDAQNQLAASLGDGLESRDNKTVVKAGPGLTITNQALTVATGNGLQVNPEGQLQLNITAGQGLNFANNSLAVELGSGLHFPPGQNQVSLYPGDGIDIRDNRVTVPAGPGLRMLNHQLAVASGDGLEVHSDTLRLKLSHGLTFENGAVRAKLGPGLGTDDSGRSVVRTGRGLRVANGQVQIFSGRGTAIGTDSSLTLNIRAPLQFSGPALTASLQGSGPITYNSNNGTFGLSIGPGMWVDQNRLQVNPGAGLVFQGNNLVPNLADPLAISDSKISLSLGPGLTQASNALTLSLGNGLEFSNQAVAIKAGRGLRFESSSQALESSLTVGNGLTLTDTVIRPNLGDGLEVRDNKIIVKLGANLRFENGAVTAGTVNPSAPEAPPTLTAEPPLRASNSHLQLSLSEGLVVHNNALALQLGDGMEVNQHGLTLRVGSGLQMRDGILTVTPSGTPIEPRLTAPLTQTENGIGLALGAGLELDESALQVKVGPGMRLNPVEKYVTLLLGPGLSFGQPANRTNYDVRVSVEPPMVFGQRGQLTFLVGHGLHIQNSKLQLNLGQGLRTDPVTNQLEVPLGQGLEIADESQVRVKLGDGLQFDSQARITTAPNMVTETLWTGTGSNANVTWRGYTAPGSKLFLSLTRFSTGLVLGNMTIDSNASFGQYINAGHEQIECFILLDNQGNLKEGSNLQGTWEVKNNPSASKAAFLPSTALYPILNESRGSLPGKNLVGMQAILGGGGTCTVIATLNGRRSNNYPAGQSIIFVWQEFNTIARQPLNHSTLTFSYWT.

Belongs to the adenoviridae fiber family. Homotrimer. Interacts (via N-terminal tail region) with pentons.

It localises to the virion. Its subcellular location is the host nucleus. In terms of biological role, forms spikes that protrude from each vertex of the icosahedral capsid. Interacts with host receptor to provide virion initial attachment to target cell. Fiber proteins are shed during virus entry, when virus is still at the cell surface. The polypeptide is Fiber protein (Bovine adenovirus B serotype 3 (BAdV-3)).